The primary structure comprises 152 residues: Ribonuclease pancreatic beta-type (152 aa).

An N-terminal signal peptide occupies residues 1 to 25; sequence MGLXKSFALFSLLVLVLGWVQPSLS. Residues 25–53 are disordered; that stretch reads SGESRESSADKFKRQHMDPDSPSKSSPTY. The segment covering 27–45 has biased composition (basic and acidic residues); the sequence is ESRESSADKFKRQHMDPDS. Positions 35 and 38 each coordinate substrate. The Proton acceptor role is filled by His-40. Intrachain disulfides connect Cys-54-Cys-112, Cys-68-Cys-123, Cys-86-Cys-138, and Cys-93-Cys-100. Substrate contacts are provided by residues 69-73 and Lys-94; that span reads KRVNT. Residue His-147 is the Proton donor of the active site.

The protein belongs to the pancreatic ribonuclease family. Monomer.

The protein resides in the secreted. The enzyme catalyses an [RNA] containing cytidine + H2O = an [RNA]-3'-cytidine-3'-phosphate + a 5'-hydroxy-ribonucleotide-3'-[RNA].. It catalyses the reaction an [RNA] containing uridine + H2O = an [RNA]-3'-uridine-3'-phosphate + a 5'-hydroxy-ribonucleotide-3'-[RNA].. Endonuclease that catalyzes the cleavage of RNA on the 3' side of pyrimidine nucleotides. Acts on single-stranded and double-stranded RNA. The protein is Ribonuclease pancreatic beta-type of Rattus tiomanicus (Malayan field rat).